Reading from the N-terminus, the 284-residue chain is Bifunctional protein FolD (284 aa).

NADP(+) is bound by residues 164 to 166 (GRS) and serine 189.

Belongs to the tetrahydrofolate dehydrogenase/cyclohydrolase family. As to quaternary structure, homodimer.

The catalysed reaction is (6R)-5,10-methylene-5,6,7,8-tetrahydrofolate + NADP(+) = (6R)-5,10-methenyltetrahydrofolate + NADPH. The enzyme catalyses (6R)-5,10-methenyltetrahydrofolate + H2O = (6R)-10-formyltetrahydrofolate + H(+). It participates in one-carbon metabolism; tetrahydrofolate interconversion. Catalyzes the oxidation of 5,10-methylenetetrahydrofolate to 5,10-methenyltetrahydrofolate and then the hydrolysis of 5,10-methenyltetrahydrofolate to 10-formyltetrahydrofolate. The protein is Bifunctional protein FolD of Listeria welshimeri serovar 6b (strain ATCC 35897 / DSM 20650 / CCUG 15529 / CIP 8149 / NCTC 11857 / SLCC 5334 / V8).